We begin with the raw amino-acid sequence, 161 residues long: Protein translocase subunit SecE (161 aa).

Residues 1 to 12 (MSDEGDVADEAV) are compositionally biased toward acidic residues. A disordered region spans residues 1 to 80 (MSDEGDVADE…GVAKDDSTTK (80 aa)). Residues 133–153 (VVLAFLAFMVALVAGADLGLT) form a helical membrane-spanning segment.

It belongs to the SecE/SEC61-gamma family. Component of the Sec protein translocase complex. Heterotrimer consisting of SecY, SecE and SecG subunits. The heterotrimers can form oligomers, although 1 heterotrimer is thought to be able to translocate proteins. Interacts with the ribosome. Interacts with SecDF, and other proteins may be involved. Interacts with SecA.

It is found in the cell membrane. Functionally, essential subunit of the Sec protein translocation channel SecYEG. Clamps together the 2 halves of SecY. May contact the channel plug during translocation. The chain is Protein translocase subunit SecE from Mycobacterium bovis (strain ATCC BAA-935 / AF2122/97).